The sequence spans 676 residues: SPARC-like protein 1 (676 aa).

The first 16 residues, 1–16 (MKTVLLLICLLGSAFT), serve as a signal peptide directing secretion. Residues 35-44 (EKHKYTHSEM) show a composition bias toward basic and acidic residues. Disordered regions lie at residues 35–151 (EKHK…WALR), 173–369 (NTVG…GVYR), and 385–437 (SEDN…RNST). A compositionally biased stretch (polar residues) spans 95–108 (KNSLRSINFLTLHS). Asparagine 182 carries an N-linked (GlcNAc...) asparagine glycan. The span at 184-202 (SEEEEAGEEEDEEWGEETD) shows a compositional bias: acidic residues. Basic and acidic residues-rich tracts occupy residues 249-266 (EKFSMEEESQEKLYKEGK) and 273-291 (NHNEDQGEKRQSEESKEHF). A compositionally biased stretch (acidic residues) spans 312–328 (NAEEDDNDSGDDGEEDL). A glycan (N-linked (GlcNAc...) asparagine) is linked at asparagine 318. Residues 385–394 (SEDNHYHHEP) are compositionally biased toward basic and acidic residues. Asparagine 396 is a glycosylation site (N-linked (GlcNAc...) asparagine). The span at 397-408 (SSSKQQLQTSSS) shows a compositional bias: low complexity. N-linked (GlcNAc...) asparagine glycosylation occurs at asparagine 413. Residues 415 to 433 (TEHEDEVKTTGGSYHEESA) are compositionally biased toward basic and acidic residues. N-linked (GlcNAc...) asparagine glycosylation is present at asparagine 435. The 23-residue stretch at 444 to 466 (LCRNFHCKRGKVCQADKQGKPSC) folds into the Follistatin-like domain. Disulfide bonds link cysteine 445–cysteine 456, cysteine 450–cysteine 466, cysteine 468–cysteine 502, cysteine 474–cysteine 495, cysteine 484–cysteine 521, cysteine 527–cysteine 638, and cysteine 646–cysteine 662. A Kazal-like domain is found at 462-523 (GKPSCICQDP…HLDYMGACKH (62 aa)). An N-linked (GlcNAc...) asparagine glycan is attached at asparagine 488. The EF-hand domain maps to 634 to 669 (PMEHCITRFFQECDGDQDKLITLKEWCHCFAIKEED). Positions 647, 649, 651, and 658 each coordinate Ca(2+).

Belongs to the SPARC family. In terms of tissue distribution, glial (Mueller) cells of the neuroretina.

It is found in the secreted. It localises to the extracellular space. Its subcellular location is the extracellular matrix. Could play a role in the late stage of neuroretina morphogenesis. In Coturnix japonica (Japanese quail), this protein is SPARC-like protein 1 (SPARCL1).